The following is a 341-amino-acid chain: Phosphate acyltransferase (341 aa).

This sequence belongs to the PlsX family. In terms of assembly, homodimer. Probably interacts with PlsY.

Its subcellular location is the cytoplasm. It catalyses the reaction a fatty acyl-[ACP] + phosphate = an acyl phosphate + holo-[ACP]. It participates in lipid metabolism; phospholipid metabolism. In terms of biological role, catalyzes the reversible formation of acyl-phosphate (acyl-PO(4)) from acyl-[acyl-carrier-protein] (acyl-ACP). This enzyme utilizes acyl-ACP as fatty acyl donor, but not acyl-CoA. The chain is Phosphate acyltransferase from Photobacterium profundum (strain SS9).